The sequence spans 1816 residues: uncharacterized protein (1816 aa).

Disordered stretches follow at residues 338 to 357 (DSSS…NNNN) and 562 to 605 (ELEK…IKPK). Residues 339-357 (SSSSSSNNNNNNNNNNNNN) show a composition bias toward low complexity. Residues 562 to 577 (ELEKERIKKEKEDSKK) are compositionally biased toward basic and acidic residues. Residues 581-603 (KQSSSSSSSSTTTTSTTTSSTIK) show a composition bias toward low complexity. In terms of domain architecture, Helicase ATP-binding spans 826 to 999 (LDIVDKRESA…FLKKIDPNRK (174 aa)). 839–846 (ASTSSGKT) is a binding site for ATP. Positions 949-952 (DEVH) match the DEAH box motif. Residues 1198-1379 (QLDLVIERFQ…SVVSPSLCLS (182 aa)) enclose the Helicase C-terminal domain. A disordered region spans residues 1388–1487 (TNGSANKSNE…TTTKTPTTTS (100 aa)). Residues 1395–1427 (SNEENKVQVKENEKEREKEKEKEKEKEKEKETI) show a composition bias toward basic and acidic residues. Acidic residues predominate over residues 1445–1454 (NWDDDEEETA). Over residues 1456–1487 (STKTTPATTPTTTTTENTPATTTTTKTPTTTS) the composition is skewed to low complexity.

This sequence belongs to the helicase family. SKI2 subfamily.

It localises to the nucleus. This is an uncharacterized protein from Dictyostelium discoideum (Social amoeba).